Reading from the N-terminus, the 134-residue chain is Transmembrane protein 100 (134 aa).

Position 15 is a phosphoserine (S15). 2 helical membrane passes run 56–76 (CVIP…AVAY) and 84–104 (IISI…ASSA). S121 carries the post-translational modification Phosphoserine.

As to quaternary structure, interacts (via C-terminus) with TRPA1 and TRPV1. Interacts with TASOR.

Its subcellular location is the cell membrane. The protein localises to the membrane. It localises to the perikaryon. The protein resides in the cytoplasm. It is found in the perinuclear region. Its subcellular location is the endoplasmic reticulum. Functionally, plays a role during embryonic arterial endothelium differentiation and vascular morphogenesis through the ACVRL1 receptor-dependent signaling pathway upon stimulation by bone morphogenetic proteins, such as GDF2/BMP9 and BMP10. Involved in the regulation of nociception, acting as a modulator of the interaction between TRPA1 and TRPV1, two molecular sensors and mediators of pain signals in dorsal root ganglia (DRG) neurons. Mechanistically, it weakens their interaction, thereby releasing the inhibition of TRPA1 by TRPV1 and increasing the single-channel open probability of the TRPA1-TRPV1 complex. The protein is Transmembrane protein 100 (TMEM100) of Bos taurus (Bovine).